Reading from the N-terminus, the 447-residue chain is Tubulin beta-2 chain (447 aa).

Positions 9, 67, 136, 140, 141, 142, 202, and 224 each coordinate GTP. Mg(2+) is bound at residue E67. Polar residues predominate over residues 411–425 (SNMNDLVSEYQQYQD). Residues 411-447 (SNMNDLVSEYQQYQDATAEEDEYEEEEEDYHQEHDEM) are disordered. The span at 427-440 (TAEEDEYEEEEEDY) shows a compositional bias: acidic residues.

This sequence belongs to the tubulin family. Dimer of alpha and beta chains. A typical microtubule is a hollow water-filled tube with an outer diameter of 25 nm and an inner diameter of 15 nM. Alpha-beta heterodimers associate head-to-tail to form protofilaments running lengthwise along the microtubule wall with the beta-tubulin subunit facing the microtubule plus end conferring a structural polarity. Microtubules usually have 13 protofilaments but different protofilament numbers can be found in some organisms and specialized cells. It depends on Mg(2+) as a cofactor.

The protein resides in the cytoplasm. Its subcellular location is the cytoskeleton. Functionally, tubulin is the major constituent of microtubules, a cylinder consisting of laterally associated linear protofilaments composed of alpha- and beta-tubulin heterodimers. Microtubules grow by the addition of GTP-tubulin dimers to the microtubule end, where a stabilizing cap forms. Below the cap, tubulin dimers are in GDP-bound state, owing to GTPase activity of alpha-tubulin. In Pisum sativum (Garden pea), this protein is Tubulin beta-2 chain (TUBB2).